Here is a 795-residue protein sequence, read N- to C-terminus: Histidine biosynthesis trifunctional protein (795 aa).

Residues methionine 1–phenylalanine 225 are phosphoribosyl-AMP cyclohydrolase. The phosphoribosyl-ATP pyrophosphohydrolase stretch occupies residues cysteine 226 to alanine 308. Residues asparagine 309–glutamate 795 are histidinol dehydrogenase. Glutamine 614 and histidine 617 together coordinate Zn(2+). Active-site residues include glutamate 683 and histidine 684. 2 residues coordinate Zn(2+): aspartate 717 and histidine 776.

This sequence in the C-terminal section; belongs to the histidinol dehydrogenase family. Zn(2+) is required as a cofactor.

The catalysed reaction is 1-(5-phospho-beta-D-ribosyl)-5'-AMP + H2O = 1-(5-phospho-beta-D-ribosyl)-5-[(5-phospho-beta-D-ribosylamino)methylideneamino]imidazole-4-carboxamide. It catalyses the reaction 1-(5-phospho-beta-D-ribosyl)-ATP + H2O = 1-(5-phospho-beta-D-ribosyl)-5'-AMP + diphosphate + H(+). The enzyme catalyses L-histidinol + 2 NAD(+) + H2O = L-histidine + 2 NADH + 3 H(+). Its pathway is amino-acid biosynthesis; L-histidine biosynthesis; L-histidine from 5-phospho-alpha-D-ribose 1-diphosphate: step 2/9. It functions in the pathway amino-acid biosynthesis; L-histidine biosynthesis; L-histidine from 5-phospho-alpha-D-ribose 1-diphosphate: step 3/9. The protein operates within amino-acid biosynthesis; L-histidine biosynthesis; L-histidine from 5-phospho-alpha-D-ribose 1-diphosphate: step 9/9. This is Histidine biosynthesis trifunctional protein (HIS4) from Kluyveromyces lactis (strain ATCC 8585 / CBS 2359 / DSM 70799 / NBRC 1267 / NRRL Y-1140 / WM37) (Yeast).